The sequence spans 430 residues: Ribosomal protein uS12 methylthiotransferase RimO (430 aa).

Residues 2 to 119 (ISVYSISLGC…WPEMIGRALG (118 aa)) form the MTTase N-terminal domain. 6 residues coordinate [4Fe-4S] cluster: C11, C46, C81, C145, C149, and C152. The Radical SAM core domain occupies 131-361 (STGPSYAYLK…MEVQAEISEE (231 aa)). The TRAM domain maps to 364–430 (EGFTGSDEDV…SRTYDLVALS (67 aa)).

The protein belongs to the methylthiotransferase family. RimO subfamily. The cofactor is [4Fe-4S] cluster.

The protein resides in the cytoplasm. The enzyme catalyses L-aspartate(89)-[ribosomal protein uS12]-hydrogen + (sulfur carrier)-SH + AH2 + 2 S-adenosyl-L-methionine = 3-methylsulfanyl-L-aspartate(89)-[ribosomal protein uS12]-hydrogen + (sulfur carrier)-H + 5'-deoxyadenosine + L-methionine + A + S-adenosyl-L-homocysteine + 2 H(+). Catalyzes the methylthiolation of an aspartic acid residue of ribosomal protein uS12. In Oleidesulfovibrio alaskensis (strain ATCC BAA-1058 / DSM 17464 / G20) (Desulfovibrio alaskensis), this protein is Ribosomal protein uS12 methylthiotransferase RimO.